Here is a 276-residue protein sequence, read N- to C-terminus: Undecaprenyl-diphosphatase (276 aa).

7 consecutive transmembrane segments (helical) span residues 40–60, 98–118, 121–141, 155–175, 200–220, 227–247, and 255–275; these read GLAF…TFFW, WLII…KDAI, IFRG…VLYY, MSFK…FPGI, FLLS…DIAT, VLLA…KLLM, and LDIF…LSVV.

The protein belongs to the UppP family.

Its subcellular location is the cell membrane. It catalyses the reaction di-trans,octa-cis-undecaprenyl diphosphate + H2O = di-trans,octa-cis-undecaprenyl phosphate + phosphate + H(+). Functionally, catalyzes the dephosphorylation of undecaprenyl diphosphate (UPP). The sequence is that of Undecaprenyl-diphosphatase from Methanosphaera stadtmanae (strain ATCC 43021 / DSM 3091 / JCM 11832 / MCB-3).